A 68-amino-acid polypeptide reads, in one-letter code: uncharacterized protein (68 aa).

A helical transmembrane segment spans residues 24-44 (AHICKCIAMFFVVAGVVLMFF).

It localises to the endoplasmic reticulum. It is found in the membrane. This is an uncharacterized protein from Saccharomyces cerevisiae (strain ATCC 204508 / S288c) (Baker's yeast).